We begin with the raw amino-acid sequence, 398 residues long: MGHDSFCYLIVLRCALRCGIIALMQICALQKKERRSKMESSDRSSQAKAFDETKTGVKGLVASGIKEIPAMFHTPPDTLTSLKQTAPPSQQLTIPTVDLKGGSMDLISRRSVVEKIGDAAERWGFFQVVNHGISVEVMERMKEGIRRFHEQDPEVKKRFYSRDHTRDVLYYSNIDLHTCNKAANWRDTLACYMAPDPPKLQDLPAVCGEIMMEYSKQLMTLGEFLFELLSEALGLNPNHLKDMGCAKSHIMFGQYYPPCPQPDLTLGISKHTDFSFITILLQDNIGGLQVIHDQCWVDVSPVPGALVINIGDLLQLISNDKFISAEHRVIANGSSEPRISMPCFVSTFMKPNPRIYGPIKELLSEQNPAKYRDLTITEFSNTFRSQTISHPALHHFRI.

Residues 247–347 form the Fe2OG dioxygenase domain; sequence KSHIMFGQYY…RISMPCFVST (101 aa). The Fe cation site is built by His-271, Asp-273, and His-327. Residue Arg-338 coordinates 2-oxoglutarate.

Belongs to the iron/ascorbate-dependent oxidoreductase family. It depends on Fe(2+) as a cofactor. As to expression, expressed in etiolated seedlings, leaves, stems and flowers.

This chain is 1-aminocyclopropane-1-carboxylate oxidase homolog 5 (2A6), found in Arabidopsis thaliana (Mouse-ear cress).